Consider the following 276-residue polypeptide: Cell wall synthesis protein KRE9 (276 aa).

The N-terminal stretch at 1–21 (MRLQRNSIICALVFLVSFVLG) is a signal peptide.

The protein belongs to the KRE9/KNH1 family. Post-translationally, O-glycosylated.

It is found in the secreted. Its subcellular location is the cell wall. Its function is as follows. Involved in cell wall beta(1-&gt;6) glucan synthesis. In Saccharomyces cerevisiae (strain ATCC 204508 / S288c) (Baker's yeast), this protein is Cell wall synthesis protein KRE9.